Reading from the N-terminus, the 277-residue chain is Phosphate import ATP-binding protein PstB (277 aa).

The ABC transporter domain maps to 31–272; the sequence is IEVPGLSLFY…PAKKQTEDYI (242 aa). 63-70 lines the ATP pocket; it reads GPSGCGKS.

The protein belongs to the ABC transporter superfamily. Phosphate importer (TC 3.A.1.7) family. As to quaternary structure, the complex is composed of two ATP-binding proteins (PstB), two transmembrane proteins (PstC and PstA) and a solute-binding protein (PstS).

The protein localises to the cell inner membrane. The catalysed reaction is phosphate(out) + ATP + H2O = ADP + 2 phosphate(in) + H(+). Its function is as follows. Part of the ABC transporter complex PstSACB involved in phosphate import. Responsible for energy coupling to the transport system. The polypeptide is Phosphate import ATP-binding protein PstB (Pseudomonas fluorescens (strain Pf0-1)).